Here is a 260-residue protein sequence, read N- to C-terminus: Collagenase (260 aa).

The signal sequence occupies residues 1 to 16 (MKFLLVFALALATTSA). The propeptide occupies 17–30 (FQHPASIFELREGR). A Peptidase S1 domain is found at 31 to 257 (IINGYEAYTG…YMDWIQQNTG (227 aa)). A disulfide bridge links Cys-60 with Cys-76. Active-site charge relay system residues include His-75 and Asp-118. Cystine bridges form between Cys-181–Cys-196 and Cys-206–Cys-234. The active-site Charge relay system is Ser-210.

This sequence belongs to the peptidase S1 family.

Its subcellular location is the secreted. The enzyme catalyses Hydrolysis of proteins including native collagen at Xaa-|-Ala bond leaving an N-terminal (75%) and a C-terminal (25%) fragment.. Inhibited by diisopropylfluorophosphate. Its function is as follows. This enzyme is a serine protease capable of degrading the native triple helix of collagen. Also cleaves the B chain of insulin at the 15-Leu-|-Try-16 and 22-Arg-|-Gly-23 bonds. Hydrolyzes casein, but not Px-Pro-Leu-Gly-Pro-DArg, BzArgNHPh, AcTyrNHPh, 2-naphthyl phosphate, 2-naphthyl butyrate, 2-naphthyl caprylate, 2-naphthyl myristate, L-leucine 2-2-naphthylamide, L-valine 2-naphthylamide, L-cysteine 2-naphthylamide or L-glutarylphenylalanine 2-naphthylamide. In Hypoderma lineatum (Early cattle grub), this protein is Collagenase.